A 533-amino-acid polypeptide reads, in one-letter code: Apolipoprotein N-acyltransferase (533 aa).

The next 6 membrane-spanning stretches (helical) occupy residues 17-37 (ALLA…FGFF), 74-94 (WLFG…ALLI), 105-125 (LAIL…AVLA), 127-147 (LLWS…GLLE), 178-198 (VIGV…PALL), and 205-225 (VPGI…GYYA). Residues 245-495 (VQPAIDQEAK…QGFVDSTLSG (251 aa)) form the CN hydrolase domain. The active-site Proton acceptor is Glu-290. The active site involves Lys-354. The active-site Nucleophile is Cys-407. Residues 509–529 (YFWLIIGIVGMIAVISRMGFI) form a helical membrane-spanning segment.

The protein belongs to the CN hydrolase family. Apolipoprotein N-acyltransferase subfamily.

The protein resides in the cell inner membrane. It catalyses the reaction N-terminal S-1,2-diacyl-sn-glyceryl-L-cysteinyl-[lipoprotein] + a glycerophospholipid = N-acyl-S-1,2-diacyl-sn-glyceryl-L-cysteinyl-[lipoprotein] + a 2-acyl-sn-glycero-3-phospholipid + H(+). The protein operates within protein modification; lipoprotein biosynthesis (N-acyl transfer). In terms of biological role, catalyzes the phospholipid dependent N-acylation of the N-terminal cysteine of apolipoprotein, the last step in lipoprotein maturation. This is Apolipoprotein N-acyltransferase from Rhizobium rhizogenes (strain K84 / ATCC BAA-868) (Agrobacterium radiobacter).